Here is a 294-residue protein sequence, read N- to C-terminus: UDP-3-O-acyl-N-acetylglucosamine deacetylase (294 aa).

Residues His75, His232, and Asp236 each coordinate Zn(2+). His259 (proton donor) is an active-site residue.

Belongs to the LpxC family. Zn(2+) serves as cofactor.

The catalysed reaction is a UDP-3-O-[(3R)-3-hydroxyacyl]-N-acetyl-alpha-D-glucosamine + H2O = a UDP-3-O-[(3R)-3-hydroxyacyl]-alpha-D-glucosamine + acetate. The protein operates within glycolipid biosynthesis; lipid IV(A) biosynthesis; lipid IV(A) from (3R)-3-hydroxytetradecanoyl-[acyl-carrier-protein] and UDP-N-acetyl-alpha-D-glucosamine: step 2/6. In terms of biological role, catalyzes the hydrolysis of UDP-3-O-myristoyl-N-acetylglucosamine to form UDP-3-O-myristoylglucosamine and acetate, the committed step in lipid A biosynthesis. This is UDP-3-O-acyl-N-acetylglucosamine deacetylase from Campylobacter curvus (strain 525.92).